The chain runs to 304 residues: Protein transport protein sec13 (304 aa).

WD repeat units follow at residues 12–51 (GHDD…QRLV), 56–97 (GHDG…WQRI), 102–143 (LHKA…WEHN), 147–203 (AHGL…NGYK), 211–253 (GHTD…PGEW), and 259–298 (NFDA…EWEN).

Belongs to the WD repeat SEC13 family. As to quaternary structure, the COPII coat is composed of at least 5 proteins: the sec23/24 complex, the sec13/31 complex, and the protein vtr-7/sar1. Component of the nuclear pore complex (NPC). NPC constitutes the exclusive means of nucleocytoplasmic transport. NPCs allow the passive diffusion of ions and small molecules and the active, nuclear transport receptor-mediated bidirectional transport of macromolecules such as proteins, RNAs, ribonucleoparticles (RNPs), and ribosomal subunits across the nuclear envelope. Due to its 8-fold rotational symmetry, all subunits are present with 8 copies or multiples thereof.

The protein localises to the cytoplasmic vesicle. It localises to the COPII-coated vesicle membrane. Its subcellular location is the endoplasmic reticulum membrane. The protein resides in the nucleus. It is found in the nuclear pore complex. Component of the coat protein complex II (COPII) which promotes the formation of transport vesicles from the endoplasmic reticulum (ER). The coat has two main functions, the physical deformation of the endoplasmic reticulum membrane into vesicles and the selection of cargo molecules. It also functions as a component of the nuclear pore complex (NPC). NPC components, collectively referred to as nucleoporins (NUPs), can play the role of both NPC structural components and of docking or interaction partners for transiently associated nuclear transport factors. Nup-20/sec13 is required for efficient mRNA export from the nucleus to the cytoplasm and for correct nuclear pore biogenesis and distribution. This Neurospora crassa (strain ATCC 24698 / 74-OR23-1A / CBS 708.71 / DSM 1257 / FGSC 987) protein is Protein transport protein sec13 (nup-20).